The primary structure comprises 574 residues: Septation ring formation regulator EzrA (574 aa).

Over 1–7 the chain is Extracellular; sequence MSSGIIL. The helical transmembrane segment at 8 to 26 threads the bilayer; sequence LIVAIVLLVIIAYLVGVII. The Cytoplasmic portion of the chain corresponds to 27–574; the sequence is RKRNDSLITS…YEKTREHIRF (548 aa). 3 coiled-coil regions span residues 102–141, 274–350, and 459–520; these read NFIR…EEKN, ELVT…ETES, and QLEA…SFEA.

It belongs to the EzrA family.

The protein resides in the cell membrane. Its function is as follows. Negative regulator of FtsZ ring formation; modulates the frequency and position of FtsZ ring formation. Inhibits FtsZ ring formation at polar sites. Interacts either with FtsZ or with one of its binding partners to promote depolymerization. The protein is Septation ring formation regulator EzrA of Streptococcus pyogenes serotype M3 (strain SSI-1).